We begin with the raw amino-acid sequence, 124 residues long: Small ribosomal subunit protein uS12 (124 aa).

The interval 9-28 (RTERQTLSRKTKSPALRSCP) is disordered. 3-methylthioaspartic acid is present on Asp-89. Residues 104–124 (TAGVKDRRQSRSKYGAKAPKE) are disordered.

Belongs to the universal ribosomal protein uS12 family. As to quaternary structure, part of the 30S ribosomal subunit. Contacts proteins S8 and S17. May interact with IF1 in the 30S initiation complex.

Functionally, with S4 and S5 plays an important role in translational accuracy. In terms of biological role, interacts with and stabilizes bases of the 16S rRNA that are involved in tRNA selection in the A site and with the mRNA backbone. Located at the interface of the 30S and 50S subunits, it traverses the body of the 30S subunit contacting proteins on the other side and probably holding the rRNA structure together. The combined cluster of proteins S8, S12 and S17 appears to hold together the shoulder and platform of the 30S subunit. The protein is Small ribosomal subunit protein uS12 of Synechococcus sp. (strain RCC307).